The chain runs to 377 residues: Polar flagellin F (377 aa).

2 coiled-coil regions span residues 98–131 (QSAN…ETTS) and 302–339 (DSQR…IQDT).

It belongs to the bacterial flagellin family. In terms of assembly, heteromer of multiple flagellin subunits including FlaA, FlaB/D, FlaC, FlaE and FlaF.

The protein localises to the secreted. The protein resides in the bacterial flagellum. In terms of biological role, flagellin is the subunit protein which polymerizes to form the filaments of bacterial flagella. In Vibrio parahaemolyticus serotype O3:K6 (strain RIMD 2210633), this protein is Polar flagellin F (flaF).